The following is a 282-amino-acid chain: Uridylate-specific endoribonuclease B (282 aa).

In terms of domain architecture, EndoU spans 4 to 278 (GDRELSALIQ…IGTTYPVPVK (275 aa)). Active-site residues include His-156, His-172, and Lys-218.

The protein belongs to the ENDOU family. As to quaternary structure, monomer. Requires Mn(2+) as cofactor.

The catalysed reaction is ribonucleotidyl-uridine-RNA = a 5'-end dephospho-uridine-RNA + a 3'-end 2',3'-cyclophospho-ribonucleotide-RNA. In terms of biological role, endoribonuclease that cleaves single-stranded RNAs at 5' of uridylates and releases a product with a 2',3'-cyclic phosphate at the 3'-end. The UU and GU sites are more efficiently cleaved than CU and AU sites. This chain is Uridylate-specific endoribonuclease B (endoub), found in Danio rerio (Zebrafish).